A 144-amino-acid polypeptide reads, in one-letter code: Cytochrome c oxidase subunit 4 isoform 1, mitochondrial (144 aa).

Residues 1-73 (SVVKSEDYTL…SFAEMNRGSN (73 aa)) lie on the Mitochondrial matrix side of the membrane. At K4 the chain carries N6-acetyllysine; alternate. K4 carries the post-translational modification N6-succinyllysine; alternate. Phosphoserine is present on residues S31 and S33. K35 is subject to N6-acetyllysine; alternate. An N6-succinyllysine; alternate modification is found at K35. K42 carries the post-translational modification N6-acetyllysine. Residues 74–99 (EWKTVVGAAMFFIGFTAILIMLEKRY) form a helical membrane-spanning segment. Residues 100 to 144 (VYGPLPHTFDKEWVAMQTKRMLDLKVNPVDGLASKWDYEKKEWKK) lie on the Mitochondrial intermembrane side of the membrane.

It belongs to the cytochrome c oxidase IV family. Component of the cytochrome c oxidase (complex IV, CIV), a multisubunit enzyme composed of 14 subunits. The complex is composed of a catalytic core of 3 subunits MT-CO1, MT-CO2 and MT-CO3, encoded in the mitochondrial DNA, and 11 supernumerary subunits COX4I, COX5A, COX5B, COX6A, COX6B, COX6C, COX7A, COX7B, COX7C, COX8 and NDUFA4, which are encoded in the nuclear genome. The complex exists as a monomer or a dimer and forms supercomplexes (SCs) in the inner mitochondrial membrane with NADH-ubiquinone oxidoreductase (complex I, CI) and ubiquinol-cytochrome c oxidoreductase (cytochrome b-c1 complex, complex III, CIII), resulting in different assemblies (supercomplex SCI(1)III(2)IV(1) and megacomplex MCI(2)III(2)IV(2)). Interacts with PHB2; the interaction decreases in absence of SPHK2. Interacts with AFG1L. Interacts with ABCB7; this interaction allows the regulation of cellular iron homeostasis and cellular reactive oxygen species (ROS) levels in cardiomyocytes. Interacts with FLVCR2; this interaction occurs in the absence of heme and is disrupted upon heme binding. Interacts with IRGC.

Its subcellular location is the mitochondrion inner membrane. The protein operates within energy metabolism; oxidative phosphorylation. Its function is as follows. Component of the cytochrome c oxidase, the last enzyme in the mitochondrial electron transport chain which drives oxidative phosphorylation. The respiratory chain contains 3 multisubunit complexes succinate dehydrogenase (complex II, CII), ubiquinol-cytochrome c oxidoreductase (cytochrome b-c1 complex, complex III, CIII) and cytochrome c oxidase (complex IV, CIV), that cooperate to transfer electrons derived from NADH and succinate to molecular oxygen, creating an electrochemical gradient over the inner membrane that drives transmembrane transport and the ATP synthase. Cytochrome c oxidase is the component of the respiratory chain that catalyzes the reduction of oxygen to water. Electrons originating from reduced cytochrome c in the intermembrane space (IMS) are transferred via the dinuclear copper A center (CU(A)) of subunit 2 and heme A of subunit 1 to the active site in subunit 1, a binuclear center (BNC) formed by heme A3 and copper B (CU(B)). The BNC reduces molecular oxygen to 2 water molecules using 4 electrons from cytochrome c in the IMS and 4 protons from the mitochondrial matrix. The sequence is that of Cytochrome c oxidase subunit 4 isoform 1, mitochondrial (COX4I1) from Pithecia pithecia (White-faced saki).